The primary structure comprises 464 residues: Meiotic plaque component protein 54 (464 aa).

The tract at residues 71-102 is disordered; it reads SISTTITPNKSSLKSPRGKRASKNSFDNETKL. Coiled-coil stretches lie at residues 99–119, 156–193, and 231–365; these read ETKLESKNETLKEVNDAVNRC, KAECERSKNAIDSLYYHEQLEKKELNEKSLQMAIDHLL, and SINS…LQTQ.

Interacts directly with SPO21/MPC70, NUD1, SPO74 and SPC42. Probable component of a spindle pole body (SPB) complex composed of ADY3, SSP1, DON1, MPC54, SPO21/MPC70, NUD1 and CNM67.

The protein localises to the prospore membrane. Its subcellular location is the cytoplasm. It is found in the cytoskeleton. The protein resides in the microtubule organizing center. It localises to the spindle pole body. The protein localises to the spindle pole. Involved in the pathway that organizes the shaping and sizing of the prospore membrane (PSM) during sporulation. The protein is Meiotic plaque component protein 54 (MPC54) of Saccharomyces cerevisiae (strain ATCC 204508 / S288c) (Baker's yeast).